The following is a 1138-amino-acid chain: Pesticidal crystal protein Cry7Aa (1138 aa).

The protein belongs to the delta endotoxin family.

Functionally, promotes colloidosmotic lysis by binding to the midgut epithelial cells of Coleoptera. This protein is not toxic in its natural form. It is highly toxic to Colorado potato beetle larvae after an in vitro solubilization and trypsin activation step. This chain is Pesticidal crystal protein Cry7Aa (cry7Aa), found in Bacillus thuringiensis.